Reading from the N-terminus, the 444-residue chain is Ribosomal protein uS12 methylthiotransferase RimO (444 aa).

Residues Pro-6–Pro-116 enclose the MTTase N-terminal domain. 6 residues coordinate [4Fe-4S] cluster: Cys-15, Cys-51, Cys-80, Cys-148, Cys-152, and Cys-155. The Radical SAM core domain occupies Leu-134–Ala-375. In terms of domain architecture, TRAM spans Gln-378–Cys-444.

It belongs to the methylthiotransferase family. RimO subfamily. Requires [4Fe-4S] cluster as cofactor.

It is found in the cytoplasm. The catalysed reaction is L-aspartate(89)-[ribosomal protein uS12]-hydrogen + (sulfur carrier)-SH + AH2 + 2 S-adenosyl-L-methionine = 3-methylsulfanyl-L-aspartate(89)-[ribosomal protein uS12]-hydrogen + (sulfur carrier)-H + 5'-deoxyadenosine + L-methionine + A + S-adenosyl-L-homocysteine + 2 H(+). Catalyzes the methylthiolation of an aspartic acid residue of ribosomal protein uS12. The polypeptide is Ribosomal protein uS12 methylthiotransferase RimO (Actinobacillus succinogenes (strain ATCC 55618 / DSM 22257 / CCUG 43843 / 130Z)).